The following is a 200-amino-acid chain: Mediator of RNA polymerase II transcription subunit 22 (200 aa).

A coiled-coil region spans residues 93-122 (SVNEAIDQRNQQLRALQEECDRKLITLRDE). A disordered region spans residues 167–200 (SAPLLASPETGAGPLQSAAPVHSHGGGPGPTEHT). Residues 190-200 (HGGGPGPTEHT) show a composition bias toward gly residues.

The protein belongs to the Mediator complex subunit 22 family. Component of the Mediator complex, which is composed of MED1, MED4, MED6, MED7, MED8, MED9, MED10, MED11, MED12, MED13, MED13L, MED14, MED15, MED16, MED17, MED18, MED19, MED20, MED21, MED22, MED23, MED24, MED25, MED26, MED27, MED29, MED30, MED31, CCNC, CDK8 and CDC2L6/CDK11. The MED12, MED13, CCNC and CDK8 subunits form a distinct module termed the CDK8 module. Mediator containing the CDK8 module is less active than Mediator lacking this module in supporting transcriptional activation. Individual preparations of the Mediator complex lacking one or more distinct subunits have been variously termed ARC, CRSP, DRIP, PC2, SMCC and TRAP.

It is found in the nucleus. Functionally, component of the Mediator complex, a coactivator involved in the regulated transcription of nearly all RNA polymerase II-dependent genes. Mediator functions as a bridge to convey information from gene-specific regulatory proteins to the basal RNA polymerase II transcription machinery. Mediator is recruited to promoters by direct interactions with regulatory proteins and serves as a scaffold for the assembly of a functional preinitiation complex with RNA polymerase II and the general transcription factors. This Rattus norvegicus (Rat) protein is Mediator of RNA polymerase II transcription subunit 22 (Med22).